A 355-amino-acid polypeptide reads, in one-letter code: Proto-oncogene Wnt-3 (355 aa).

Positions M1–A21 are cleaved as a signal peptide. 11 disulfides stabilise this stretch: C80–C91, C131–C139, C141–C158, C206–C220, C208–C215, C284–C315, C300–C310, C314–C354, C330–C345, C332–C342, and C337–C338. The N-linked (GlcNAc...) asparagine glycan is linked to N90. S212 is lipidated: O-palmitoleoyl serine; by PORCN. An N-linked (GlcNAc...) asparagine glycan is attached at N301.

Belongs to the Wnt family. Forms a soluble 1:1 complex with AFM; this prevents oligomerization and is required for prolonged biological activity. The complex with AFM may represent the physiological form in body fluids. Interacts with PORCN. Interacts with WLS. In terms of processing, palmitoleoylation is required for efficient binding to frizzled receptors. Depalmitoleoylation leads to Wnt signaling pathway inhibition. In terms of tissue distribution, detected at low levels in adult brain. Dorsal portion of the neural tube, dorsal ectoderm, the branchial arches, and the limb buds.

It localises to the secreted. It is found in the extracellular space. The protein localises to the extracellular matrix. In terms of biological role, ligand for members of the frizzled family of seven transmembrane receptors. Functions in the canonical Wnt signaling pathway that results in activation of transcription factors of the TCF/LEF family. Required for normal gastrulation, formation of the primitive streak, and for the formation of the mesoderm during early embryogenesis. Required for normal formation of the apical ectodermal ridge and for normal embryonic limb development. In Mus musculus (Mouse), this protein is Proto-oncogene Wnt-3 (Wnt3).